The sequence spans 224 residues: Serum amyloid P-component (224 aa).

The first 20 residues, 1 to 20 (MDKLLLWMFVFTSLLSEAFC), serve as a signal peptide directing secretion. In terms of domain architecture, Pentraxin (PTX) spans 25–224 (KRKVFVFPRE…YVVIRPRVWD (200 aa)). A glycan (N-linked (GlcNAc...) asparagine) is linked at Asn52. An intrachain disulfide couples Cys56 to Cys115. Asp78, Asn79, Glu156, Gln157, Asp158, and Gln168 together coordinate Ca(2+).

This sequence belongs to the pentraxin family. In terms of assembly, homopentamer. Pentraxin (or pentaxin) have a discoid arrangement of 5 non-covalently bound subunits. The cofactor is Ca(2+).

The protein localises to the secreted. This Mus musculus (Mouse) protein is Serum amyloid P-component (Apcs).